The following is a 291-amino-acid chain: Bifunctional protein FolD 1 (291 aa).

Residues Gly-167–Ser-169, Ile-192, and Ile-233 each bind NADP(+).

Belongs to the tetrahydrofolate dehydrogenase/cyclohydrolase family. As to quaternary structure, homodimer.

It carries out the reaction (6R)-5,10-methylene-5,6,7,8-tetrahydrofolate + NADP(+) = (6R)-5,10-methenyltetrahydrofolate + NADPH. The enzyme catalyses (6R)-5,10-methenyltetrahydrofolate + H2O = (6R)-10-formyltetrahydrofolate + H(+). Its pathway is one-carbon metabolism; tetrahydrofolate interconversion. Catalyzes the oxidation of 5,10-methylenetetrahydrofolate to 5,10-methenyltetrahydrofolate and then the hydrolysis of 5,10-methenyltetrahydrofolate to 10-formyltetrahydrofolate. The protein is Bifunctional protein FolD 1 of Pseudomonas putida (strain ATCC 47054 / DSM 6125 / CFBP 8728 / NCIMB 11950 / KT2440).